Reading from the N-terminus, the 101-residue chain is Protein Tat (101 aa).

Residues 1-12 show a composition bias toward basic and acidic residues; the sequence is MEPVDPRLEPWK. Positions 1–24 are disordered; that stretch reads MEPVDPRLEPWKHPGSQPKTASNN. Positions 1 to 24 are interaction with human CREBBP; that stretch reads MEPVDPRLEPWKHPGSQPKTASNN. The interval 1–48 is transactivation; it reads MEPVDPRLEPWKHPGSQPKTASNNCYCKRCCLHCQVCFTKKGLGISYG. Residues 22-37 are cysteine-rich; it reads SNNCYCKRCCLHCQVC. Cysteine 25 and cysteine 27 together coordinate Zn(2+). N6-acetyllysine; by host PCAF is present on lysine 28. Zn(2+)-binding residues include cysteine 30, histidine 33, cysteine 34, and cysteine 37. The core stretch occupies residues 38–48; sequence FTKKGLGISYG. Positions 45 to 101 are disordered; the sequence is ISYGRKKRRQRRRAPQDSKTHQVSLSKQPASQPRGDPTGPKESKKKVERETETDPED. Residues 48 to 57 show a composition bias toward basic residues; sequence GRKKRRQRRR. The short motif at 49–57 is the Nuclear localization signal, RNA-binding (TAR), and protein transduction element; that stretch reads RKKRRQRRR. The segment at 49–86 is interaction with the host capping enzyme RNGTT; sequence RKKRRQRRRAPQDSKTHQVSLSKQPASQPRGDPTGPKE. Residues lysine 50 and lysine 51 each carry the N6-acetyllysine; by host EP300 and GCN5L2 modification. Asymmetric dimethylarginine; by host PRMT6 occurs at positions 52 and 53. Residues 65–75 are compositionally biased toward polar residues; it reads HQVSLSKQPAS. A Glycyl lysine isopeptide (Lys-Gly) (interchain with G-Cter in ubiquitin) cross-link involves residue lysine 71. The Cell attachment site signature appears at 78-80; the sequence is RGD. Residues 83-101 show a composition bias toward basic and acidic residues; the sequence is GPKESKKKVERETETDPED.

Belongs to the lentiviruses Tat family. Interacts with host CCNT1. Associates with the P-TEFb complex composed at least of Tat, P-TEFb (CDK9 and CCNT1), TAR RNA, RNA Pol II. Recruits the HATs CREBBP, TAF1/TFIID, EP300, PCAF and GCN5L2. Interacts with host KAT5/Tip60; this interaction targets the latter to degradation. Interacts with the host deacetylase SIRT1. Interacts with host capping enzyme RNGTT; this interaction stimulates RNGTT. Binds to host KDR, and to the host integrins ITGAV/ITGB3 and ITGA5/ITGB1. Interacts with host KPNB1/importin beta-1 without previous binding to KPNA1/importin alpha-1. Interacts with EIF2AK2. Interacts with host nucleosome assembly protein NAP1L1; this interaction may be required for the transport of Tat within the nucleus, since the two proteins interact at the nuclear rim. Interacts with host C1QBP/SF2P32; this interaction involves lysine-acetylated Tat. Interacts with the host chemokine receptors CCR2, CCR3 and CXCR4. Interacts with host DPP4/CD26; this interaction may trigger an anti-proliferative effect. Interacts with host LDLR. Interacts with the host extracellular matrix metalloproteinase MMP1. Interacts with host PRMT6; this interaction mediates Tat's methylation. Interacts with, and is ubiquitinated by MDM2/Hdm2. Interacts with host PSMC3 and HTATIP2. Interacts with STAB1; this interaction may overcome SATB1-mediated repression of IL2 and IL2RA (interleukin) in T cells by binding to the same domain than HDAC1. Interacts (when acetylated) with human CDK13, thereby increasing HIV-1 mRNA splicing and promoting the production of the doubly spliced HIV-1 protein Nef. Interacts with host TBP; this interaction modulates the activity of transcriptional pre-initiation complex. Interacts with host RELA. Interacts with host PLSCR1; this interaction negatively regulates Tat transactivation activity by altering its subcellular distribution. In terms of processing, asymmetrical arginine methylation by host PRMT6 seems to diminish the transactivation capacity of Tat and affects the interaction with host CCNT1. Post-translationally, acetylation by EP300, CREBBP, GCN5L2/GCN5 and PCAF regulates the transactivation activity of Tat. EP300-mediated acetylation of Lys-50 promotes dissociation of Tat from the TAR RNA through the competitive binding to PCAF's bromodomain. In addition, the non-acetylated Tat's N-terminus can also interact with PCAF. PCAF-mediated acetylation of Lys-28 enhances Tat's binding to CCNT1. Lys-50 is deacetylated by SIRT1. Polyubiquitination by host MDM2 does not target Tat to degradation, but activates its transactivation function and fosters interaction with CCNT1 and TAR RNA. In terms of processing, phosphorylated by EIF2AK2 on serine and threonine residues adjacent to the basic region important for TAR RNA binding and function. Phosphorylation of Tat by EIF2AK2 is dependent on the prior activation of EIF2AK2 by dsRNA.

Its subcellular location is the host nucleus. It localises to the host nucleolus. The protein resides in the host cytoplasm. It is found in the secreted. In terms of biological role, transcriptional activator that increases RNA Pol II processivity, thereby increasing the level of full-length viral transcripts. Recognizes a hairpin structure at the 5'-LTR of the nascent viral mRNAs referred to as the transactivation responsive RNA element (TAR) and recruits the cyclin T1-CDK9 complex (P-TEFb complex) that will in turn hyperphosphorylate the RNA polymerase II to allow efficient elongation. The CDK9 component of P-TEFb and other Tat-activated kinases hyperphosphorylate the C-terminus of RNA Pol II that becomes stabilized and much more processive. Other factors such as HTATSF1/Tat-SF1, SUPT5H/SPT5, and HTATIP2 are also important for Tat's function. Besides its effect on RNA Pol II processivity, Tat induces chromatin remodeling of proviral genes by recruiting the histone acetyltransferases (HATs) CREBBP, EP300 and PCAF to the chromatin. This also contributes to the increase in proviral transcription rate, especially when the provirus integrates in transcriptionally silent region of the host genome. To ensure maximal activation of the LTR, Tat mediates nuclear translocation of NF-kappa-B by interacting with host RELA. Through its interaction with host TBP, Tat may also modulate transcription initiation. Tat can reactivate a latently infected cell by penetrating in it and transactivating its LTR promoter. In the cytoplasm, Tat is thought to act as a translational activator of HIV-1 mRNAs. Extracellular circulating Tat can be endocytosed by surrounding uninfected cells via the binding to several surface receptors such as CD26, CXCR4, heparan sulfate proteoglycans (HSPG) or LDLR. Neurons are rarely infected, but they internalize Tat via their LDLR. Through its interaction with nuclear HATs, Tat is potentially able to control the acetylation-dependent cellular gene expression. Modulates the expression of many cellular genes involved in cell survival, proliferation or in coding for cytokines or cytokine receptors. Tat plays a role in T-cell and neurons apoptosis. Tat induced neurotoxicity and apoptosis probably contribute to neuroAIDS. Circulating Tat also acts as a chemokine-like and/or growth factor-like molecule that binds to specific receptors on the surface of the cells, affecting many cellular pathways. In the vascular system, Tat binds to ITGAV/ITGB3 and ITGA5/ITGB1 integrins dimers at the surface of endothelial cells and competes with bFGF for heparin-binding sites, leading to an excess of soluble bFGF. The protein is Protein Tat of Homo sapiens (Human).